Here is a 296-residue protein sequence, read N- to C-terminus: Phosphoribosylaminoimidazole-succinocarboxamide synthase (296 aa).

This sequence belongs to the SAICAR synthetase family.

The catalysed reaction is 5-amino-1-(5-phospho-D-ribosyl)imidazole-4-carboxylate + L-aspartate + ATP = (2S)-2-[5-amino-1-(5-phospho-beta-D-ribosyl)imidazole-4-carboxamido]succinate + ADP + phosphate + 2 H(+). It functions in the pathway purine metabolism; IMP biosynthesis via de novo pathway; 5-amino-1-(5-phospho-D-ribosyl)imidazole-4-carboxamide from 5-amino-1-(5-phospho-D-ribosyl)imidazole-4-carboxylate: step 1/2. This Geobacter sulfurreducens (strain ATCC 51573 / DSM 12127 / PCA) protein is Phosphoribosylaminoimidazole-succinocarboxamide synthase.